Reading from the N-terminus, the 360-residue chain is Inward rectifier potassium channel 13 (360 aa).

At 1–50 (MDGSHCKVIAPLLTERHQRMVTKDGHSTLQMDGAQTGLAYLRDAWGILMD) the chain is on the cytoplasmic side. Residues 51-77 (MRWRWMMLVFSASFVIHWLVFAVLWYI) form a helical membrane-spanning segment. At 78-105 (LAEMNGDLGLDHDAPPENHTICVKYITS) the chain is on the extracellular side. The segment at residues 106–122 (FTAAFSFSLETQLTIGY) is an intramembrane region (helical; Pore-forming). The Selectivity filter motif lies at 119–124 (TIGYGT). The Extracellular segment spans residues 123 to 131 (GTMFPSGDC). The chain crosses the membrane as a helical span at residues 132–157 (PSAIALLAIQMLLGLMLEAFITGAFV). At 158–360 (AKIARPKNRA…FQISETGLTE (203 aa)) the chain is on the cytoplasmic side. S287 carries the post-translational modification Phosphoserine.

The protein belongs to the inward rectifier-type potassium channel (TC 1.A.2.1) family. Homotetramer. Interacts with RAB28; the interaction may facilitate cone outer segments phagocytosis. Post-translationally, phosphorylation at Ser-287 by PKA increases them.

The protein localises to the membrane. It is found in the cell membrane. It carries out the reaction K(+)(in) = K(+)(out). Its activity is regulated as follows. Inhibited by Ba(2+) and Cs(+), although sensitivity to those inhibitors is much lower than in other Kir channels. Inward rectifier potassium channels are characterized by a greater tendency to allow potassium to flow into the cell rather than out of it. Their voltage dependence is regulated by the concentration of extracellular potassium; as external potassium is raised, the voltage range of the channel opening shifts to more positive voltages. The inward rectification is mainly due to the blockage of outward current by internal magnesium. KCNJ13 has a very low single channel conductance, low sensitivity to block by external barium and cesium, and no dependence of its inward rectification properties on the internal blocking particle magnesium. The chain is Inward rectifier potassium channel 13 (KCNJ13) from Bos taurus (Bovine).